We begin with the raw amino-acid sequence, 185 residues long: Large ribosomal subunit protein uL5 (185 aa).

The protein belongs to the universal ribosomal protein uL5 family. In terms of assembly, part of the 50S ribosomal subunit; part of the 5S rRNA/L5/L18/L25 subcomplex. Contacts the 5S rRNA and the P site tRNA. Forms a bridge to the 30S subunit in the 70S ribosome.

In terms of biological role, this is one of the proteins that bind and probably mediate the attachment of the 5S RNA into the large ribosomal subunit, where it forms part of the central protuberance. In the 70S ribosome it contacts protein S13 of the 30S subunit (bridge B1b), connecting the 2 subunits; this bridge is implicated in subunit movement. Contacts the P site tRNA; the 5S rRNA and some of its associated proteins might help stabilize positioning of ribosome-bound tRNAs. This Rhizobium johnstonii (strain DSM 114642 / LMG 32736 / 3841) (Rhizobium leguminosarum bv. viciae) protein is Large ribosomal subunit protein uL5.